We begin with the raw amino-acid sequence, 615 residues long: Medium-chain acyl-CoA ligase ACSF2, mitochondrial (615 aa).

The N-terminal 49 residues, Met-1–Cys-49, are a transit peptide targeting the mitochondrion. Lys-179 bears the N6-acetyllysine mark. At Lys-182 the chain carries N6-acetyllysine; alternate. N6-succinyllysine; alternate is present on Lys-182. Residue Lys-199 is modified to N6-acetyllysine. Residue Thr-263–Lys-271 participates in ATP binding. N6-acetyllysine occurs at positions 340 and 398. Residue Lys-478 is modified to N6-succinyllysine. ATP-binding residues include Asp-493 and Arg-508. At Lys-510 the chain carries N6-acetyllysine. An N6-acetyllysine; alternate mark is found at Lys-544 and Lys-570. Lys-544 and Lys-570 each carry N6-succinyllysine; alternate. Lys-599 provides a ligand contact to ATP. Lys-599 is modified (N6-succinyllysine).

This sequence belongs to the ATP-dependent AMP-binding enzyme family.

The protein localises to the mitochondrion. The enzyme catalyses a medium-chain fatty acid + ATP + CoA = a medium-chain fatty acyl-CoA + AMP + diphosphate. The catalysed reaction is octanoate + ATP + CoA = octanoyl-CoA + AMP + diphosphate. Acyl-CoA synthases catalyze the initial reaction in fatty acid metabolism, by forming a thioester with CoA. Has some preference toward medium-chain substrates. Plays a role in adipocyte differentiation. This chain is Medium-chain acyl-CoA ligase ACSF2, mitochondrial, found in Rattus norvegicus (Rat).